The sequence spans 312 residues: tRNA pseudouridine synthase B (312 aa).

Residue Asp-37 is the Nucleophile of the active site.

It belongs to the pseudouridine synthase TruB family. Type 1 subfamily.

The enzyme catalyses uridine(55) in tRNA = pseudouridine(55) in tRNA. In terms of biological role, responsible for synthesis of pseudouridine from uracil-55 in the psi GC loop of transfer RNAs. The polypeptide is tRNA pseudouridine synthase B (Deinococcus geothermalis (strain DSM 11300 / CIP 105573 / AG-3a)).